The chain runs to 466 residues: MSVRTRFAPSPTGYLHIGGVRTALYSWLHARRQGGHFILRIEDTDVERSTPEATVAILEGMAWLGLDWDEGPFYQMRRMDRYREVLAQMLAAGTAYHCYCSREEVEAMREDQRQRGEKPRYDGRCRERTTVPEGVAPVIRFRSPDDGETVVEDLIHGTVRFQNSEMDDLIIARSDGTPTYNFCVVVDDWDMGITHVIRGDDHLNNTPRQMQILQALGARVPVYAHVPMILGPDKQKLSKRHGAVSVLEYREQGFLPDALLNFLVRLGWSHGDQEIFTREEMVEFFRIDAVNKAASAFNPEKLLWINAQHMQRLTPEGLAQHLLPYLNAVGVTEPLLASGPELPAVVALLQERSKTLVEMAAAAEMFYVAPVAGEPKDVEKHLHGQSALLATMTQALGALPNWEAAAIHSVIQELAVTHADGKMGKVAQPLRVAVAGRAVSPPIDATLALLGKEETLARLRRAAAWI.

Positions 9-19 match the 'HIGH' region motif; the sequence is PSPTGYLHIGG. Zn(2+) contacts are provided by Cys-98, Cys-100, Cys-125, and Glu-127. A 'KMSKS' region motif is present at residues 236-240; sequence KLSKR. Lys-239 serves as a coordination point for ATP.

It belongs to the class-I aminoacyl-tRNA synthetase family. Glutamate--tRNA ligase type 1 subfamily. Monomer. Requires Zn(2+) as cofactor.

It is found in the cytoplasm. The catalysed reaction is tRNA(Glu) + L-glutamate + ATP = L-glutamyl-tRNA(Glu) + AMP + diphosphate. Its function is as follows. Catalyzes the attachment of glutamate to tRNA(Glu) in a two-step reaction: glutamate is first activated by ATP to form Glu-AMP and then transferred to the acceptor end of tRNA(Glu). This chain is Glutamate--tRNA ligase 1, found in Acidithiobacillus ferrooxidans (strain ATCC 53993 / BNL-5-31) (Leptospirillum ferrooxidans (ATCC 53993)).